Here is a 137-residue protein sequence, read N- to C-terminus: Ribosome-binding factor A (137 aa).

The protein belongs to the RbfA family. In terms of assembly, monomer. Binds 30S ribosomal subunits, but not 50S ribosomal subunits or 70S ribosomes.

Its subcellular location is the cytoplasm. Functionally, one of several proteins that assist in the late maturation steps of the functional core of the 30S ribosomal subunit. Associates with free 30S ribosomal subunits (but not with 30S subunits that are part of 70S ribosomes or polysomes). Required for efficient processing of 16S rRNA. May interact with the 5'-terminal helix region of 16S rRNA. This chain is Ribosome-binding factor A, found in Trichodesmium erythraeum (strain IMS101).